The chain runs to 333 residues: 2-oxoglutarate-dependent dioxygenase 21, chloroplastic (333 aa).

The N-terminal 43 residues, 1-43, are a transit peptide targeting the chloroplast; sequence MPAVAGSLYMASQHKGVPPPLPPPPRPLPVINLGRLTMDSASR. Residues 180–281 form the Fe2OG dioxygenase domain; that stretch reads GVQFVALNNY…RISIASIHGL (102 aa). Residues His205, Asp207, and His262 each coordinate Fe cation. Arg272 provides a ligand contact to 2-oxoglutarate.

It belongs to the iron/ascorbate-dependent oxidoreductase family. The cofactor is Fe(2+). L-ascorbate serves as cofactor. In terms of tissue distribution, expressed in roots.

The protein resides in the plastid. The protein localises to the chloroplast. The enzyme catalyses melatonin + 2-oxoglutarate + O2 = 2-hydroxymelatonin + succinate + CO2. Functionally, involved in melatonin degradation. Catalyzes the hydroxylation of melatonin to produce 2-hydroxymelatonin. The polypeptide is 2-oxoglutarate-dependent dioxygenase 21, chloroplastic (Oryza sativa subsp. japonica (Rice)).